A 213-amino-acid chain; its full sequence is General transcription factor 3C polypeptide 6 (213 aa).

Residues 1-11 (MAAAADERSPE) are compositionally biased toward basic and acidic residues. Disordered stretches follow at residues 1–20 (MAAA…EEEE) and 191–213 (SGPL…QMLP). Residue A2 is modified to N-acetylalanine. S9 is subject to Phosphoserine.

It belongs to the TFIIIC subunit 6 family. As to quaternary structure, part of the TFIIIC subcomplex TFIIIC2, consisting of six subunits, GTF3C1, GTF3C2, GTF3C3, GTF3C4, GTF3C5 and GTF3C6. Interacts with GTF3C4 and GTF3C5.

Its subcellular location is the nucleus. Involved in RNA polymerase III-mediated transcription. Integral, tightly associated component of the DNA-binding TFIIIC2 subcomplex that directly binds tRNA and virus-associated RNA promoters. The sequence is that of General transcription factor 3C polypeptide 6 (GTF3C6) from Homo sapiens (Human).